A 562-amino-acid polypeptide reads, in one-letter code: Undecaprenyl phosphate-alpha-4-amino-4-deoxy-L-arabinose arabinosyl transferase (562 aa).

Helical transmembrane passes span 14-34, 91-111, 120-140, 142-162, 186-206, 215-235, 267-287, 302-322, 324-344, 354-374, 395-415, and 425-445; these read IKFS…PLNY, FSVR…IYLF, ILSL…IIGT, SVLD…FWLA, FITK…IWLF, TIIH…PWIY, PFWY…GFLF, IEFY…ISKG, LPTY…KNIE, LLKI…IFII, LILC…IIFN, and LSII…IIYA.

The protein belongs to the glycosyltransferase 83 family.

It is found in the cell inner membrane. The catalysed reaction is 4-amino-4-deoxy-alpha-L-arabinopyranosyl di-trans,octa-cis-undecaprenyl phosphate + lipid IVA = lipid IIA + di-trans,octa-cis-undecaprenyl phosphate.. The protein operates within lipopolysaccharide metabolism; 4-amino-4-deoxy-beta-L-arabinose-lipid A biosynthesis. Catalyzes the transfer of the L-Ara4N moiety of the glycolipid undecaprenyl phosphate-alpha-L-Ara4N to lipid A. The modified arabinose is attached to lipid A and is required for resistance to polymyxin and cationic antimicrobial peptides. The protein is Undecaprenyl phosphate-alpha-4-amino-4-deoxy-L-arabinose arabinosyl transferase of Wigglesworthia glossinidia brevipalpis.